A 616-amino-acid polypeptide reads, in one-letter code: Zinc metalloproteinase nas-36 (616 aa).

Positions M1–A21 are cleaved as a signal peptide. Residues Q22 to R125 constitute a propeptide that is removed on maturation. Residues S126 to K321 enclose the Peptidase M12A domain. 9 disulfide bridges follow: C168-C320, C191-C210, C324-C345, C347-C356, C367-C396, C424-C444, C518-C549, C522-C554, and C534-C539. N173 is a glycosylation site (N-linked (GlcNAc...) asparagine). H218 contributes to the Zn(2+) binding site. Residue E219 is part of the active site. Residues H222 and H228 each coordinate Zn(2+). The region spanning N316–E357 is the EGF-like domain. The region spanning C367–T481 is the CUB domain. Residues P506–P555 form the TSP type-1 domain.

Zn(2+) serves as cofactor.

Its subcellular location is the secreted. In terms of biological role, mtalloprotease. Involved in molting, a process during larval stages in which a new cuticle is formed and the old cuticle is shed. The sequence is that of Zinc metalloproteinase nas-36 from Caenorhabditis briggsae.